A 91-amino-acid polypeptide reads, in one-letter code: UPF0250 protein PputW619_0619 (91 aa).

This sequence belongs to the UPF0250 family.

This Pseudomonas putida (strain W619) protein is UPF0250 protein PputW619_0619.